The chain runs to 187 residues: Troponin I, slow skeletal muscle (187 aa).

The residue at position 2 (P2) is an N-acetylproline. Residues 2-48 (PEVERKSKITASRKLMLKSLMLAKAKECWEQEHEEREAEKVRYLSER) form an involved in binding TNC region. S58 carries the phosphoserine modification. The interval 97-118 (LKLKVLDLRGKFKRPPLRRVRV) is involved in binding TNC and actin.

It belongs to the troponin I family. In terms of assembly, binds to actin and tropomyosin.

In terms of biological role, troponin I is the inhibitory subunit of troponin, the thin filament regulatory complex which confers calcium-sensitivity to striated muscle actomyosin ATPase activity. The chain is Troponin I, slow skeletal muscle (Tnni1) from Rattus norvegicus (Rat).